The following is a 233-amino-acid chain: Biosynthetic peptidoglycan transglycosylase (233 aa).

The chain crosses the membrane as a helical span at residues 8–28 (LIALPVGIFIFFNAYVYGNII).

The protein belongs to the glycosyltransferase 51 family.

The protein resides in the cell inner membrane. It carries out the reaction [GlcNAc-(1-&gt;4)-Mur2Ac(oyl-L-Ala-gamma-D-Glu-L-Lys-D-Ala-D-Ala)](n)-di-trans,octa-cis-undecaprenyl diphosphate + beta-D-GlcNAc-(1-&gt;4)-Mur2Ac(oyl-L-Ala-gamma-D-Glu-L-Lys-D-Ala-D-Ala)-di-trans,octa-cis-undecaprenyl diphosphate = [GlcNAc-(1-&gt;4)-Mur2Ac(oyl-L-Ala-gamma-D-Glu-L-Lys-D-Ala-D-Ala)](n+1)-di-trans,octa-cis-undecaprenyl diphosphate + di-trans,octa-cis-undecaprenyl diphosphate + H(+). It functions in the pathway cell wall biogenesis; peptidoglycan biosynthesis. Its function is as follows. Peptidoglycan polymerase that catalyzes glycan chain elongation from lipid-linked precursors. The chain is Biosynthetic peptidoglycan transglycosylase from Neisseria meningitidis serogroup C (strain 053442).